The following is a 102-amino-acid chain: Small ribosomal subunit protein uS10 (102 aa).

This sequence belongs to the universal ribosomal protein uS10 family. In terms of assembly, part of the 30S ribosomal subunit.

Functionally, involved in the binding of tRNA to the ribosomes. This chain is Small ribosomal subunit protein uS10, found in Methanoculleus marisnigri (strain ATCC 35101 / DSM 1498 / JR1).